The chain runs to 455 residues: Bifunctional protein GlmU (455 aa).

A pyrophosphorylase region spans residues 1-230 (MTKRNAIILA…FDESMGVNDR (230 aa)). UDP-N-acetyl-alpha-D-glucosamine-binding positions include 9–12 (LAAG), Lys-23, Gln-73, 78–79 (GT), 101–103 (SGD), Gly-140, Glu-155, Asn-170, and Asn-228. Asp-103 contributes to the Mg(2+) binding site. Residue Asn-228 participates in Mg(2+) binding. A linker region spans residues 231 to 251 (VALARANKVMRNRINTHWMRE). Positions 252-455 (GVSMIDPETT…KENYAKKLPW (204 aa)) are N-acetyltransferase. The UDP-N-acetyl-alpha-D-glucosamine site is built by Arg-333 and Lys-351. Residue His-363 is the Proton acceptor of the active site. Residues Tyr-366 and Asn-377 each contribute to the UDP-N-acetyl-alpha-D-glucosamine site. Acetyl-CoA is bound by residues 386–387 (NY), Ser-405, Ala-423, and Arg-440.

In the N-terminal section; belongs to the N-acetylglucosamine-1-phosphate uridyltransferase family. This sequence in the C-terminal section; belongs to the transferase hexapeptide repeat family. Homotrimer. The cofactor is Mg(2+).

Its subcellular location is the cytoplasm. It catalyses the reaction alpha-D-glucosamine 1-phosphate + acetyl-CoA = N-acetyl-alpha-D-glucosamine 1-phosphate + CoA + H(+). It carries out the reaction N-acetyl-alpha-D-glucosamine 1-phosphate + UTP + H(+) = UDP-N-acetyl-alpha-D-glucosamine + diphosphate. Its pathway is nucleotide-sugar biosynthesis; UDP-N-acetyl-alpha-D-glucosamine biosynthesis; N-acetyl-alpha-D-glucosamine 1-phosphate from alpha-D-glucosamine 6-phosphate (route II): step 2/2. The protein operates within nucleotide-sugar biosynthesis; UDP-N-acetyl-alpha-D-glucosamine biosynthesis; UDP-N-acetyl-alpha-D-glucosamine from N-acetyl-alpha-D-glucosamine 1-phosphate: step 1/1. It functions in the pathway bacterial outer membrane biogenesis; LPS lipid A biosynthesis. Catalyzes the last two sequential reactions in the de novo biosynthetic pathway for UDP-N-acetylglucosamine (UDP-GlcNAc). The C-terminal domain catalyzes the transfer of acetyl group from acetyl coenzyme A to glucosamine-1-phosphate (GlcN-1-P) to produce N-acetylglucosamine-1-phosphate (GlcNAc-1-P), which is converted into UDP-GlcNAc by the transfer of uridine 5-monophosphate (from uridine 5-triphosphate), a reaction catalyzed by the N-terminal domain. In Limosilactobacillus reuteri (strain DSM 20016) (Lactobacillus reuteri), this protein is Bifunctional protein GlmU.